The sequence spans 132 residues: Fatty acid-binding protein 9 (132 aa).

A phosphoserine mark is found at S13, S14, S40, S42, S44, and S91.

This sequence belongs to the calycin superfamily. Fatty-acid binding protein (FABP) family. Testis.

It localises to the cytoplasm. The polypeptide is Fatty acid-binding protein 9 (Fabp9) (Mus musculus (Mouse)).